Reading from the N-terminus, the 236-residue chain is Large ribosomal subunit protein uL1 (236 aa).

The protein belongs to the universal ribosomal protein uL1 family. As to quaternary structure, part of the 50S ribosomal subunit.

In terms of biological role, binds directly to 23S rRNA. The L1 stalk is quite mobile in the ribosome, and is involved in E site tRNA release. Functionally, protein L1 is also a translational repressor protein, it controls the translation of the L11 operon by binding to its mRNA. This is Large ribosomal subunit protein uL1 from Corynebacterium glutamicum (strain R).